A 94-amino-acid chain; its full sequence is Co-chaperonin GroES (94 aa).

The protein belongs to the GroES chaperonin family. As to quaternary structure, heptamer of 7 subunits arranged in a ring. Interacts with the chaperonin GroEL.

It localises to the cytoplasm. Functionally, together with the chaperonin GroEL, plays an essential role in assisting protein folding. The GroEL-GroES system forms a nano-cage that allows encapsulation of the non-native substrate proteins and provides a physical environment optimized to promote and accelerate protein folding. GroES binds to the apical surface of the GroEL ring, thereby capping the opening of the GroEL channel. The chain is Co-chaperonin GroES from Orientia tsutsugamushi (Rickettsia tsutsugamushi).